The following is a 305-amino-acid chain: T-cell immunoglobulin and mucin domain-containing protein 2 (305 aa).

Positions 1-21 (MNQIQVFISGLILLLPGAVES) are cleaved as a signal peptide. Residues 22 to 125 (HTAVQGLAGH…AFHFVDYMLE (104 aa)) enclose the Ig-like V-type domain. At 22–231 (HTAVQGLAGH…QKPQKNLNKG (210 aa)) the chain is on the extracellular side. Intrachain disulfides connect Cys-37-Cys-109, Cys-50-Cys-61, and Cys-56-Cys-108. N-linked (GlcNAc...) asparagine glycosylation is found at Asn-86 and Asn-91. The segment at 130–174 (ISTSPPTRPTATGRPTTISTRSTHVPTSTRVSTSTSPTPAHTETY) is disordered. A compositionally biased stretch (low complexity) spans 131–167 (STSPPTRPTATGRPTTISTRSTHVPTSTRVSTSTSPT). Residues 232–252 (FYVGISIAALLILMLLSTMVI) traverse the membrane as a helical segment. Residues 253–305 (TRYVVMKRKSESLSFVAFPISKIGASPKKVVERTRCEDQVYIIEDTPYPEEES) are Cytoplasmic-facing.

Belongs to the immunoglobulin superfamily. TIM family. In terms of assembly, homodimer. In terms of tissue distribution, expressed on late differentiated Th2 cells. Expressed also on all splenic B-cells, with increased levels on germinal center B-cells, in the liver, especially in bile duct epithelial cells, and in renal tubule cells. Within retina, mainly expressed in Mueller cells.

Its subcellular location is the cell membrane. Its function is as follows. Cell surface glycoprotein that participates in iron homeostasis in the liver, the kidney, the retina and oligodendrocytes by acting as a receptor of H-ferritin. Mechanistically, mediates iron-containing ferritin uptake via an endocytic pathway, trafficking to endosomes and subsequently to lysosomes. Plays also an important role in the regulation of Th2 immunity. Receptor for SEMA4A involved in the regulation of T-cell function, enhancing T-cell activation. The sequence is that of T-cell immunoglobulin and mucin domain-containing protein 2 (Timd2) from Mus musculus (Mouse).